The sequence spans 148 residues: Lysozyme C-2 (148 aa).

Positions 1–18 (MKTLLTLGLLLLSVTAQA) are cleaved as a signal peptide. Positions 19 to 148 (KVYERCEFAR…LSQYIRNCGV (130 aa)) constitute a C-type lysozyme domain. Disulfide bonds link C24-C146, C48-C134, C83-C99, and C95-C113. Catalysis depends on residues E53 and D71.

Belongs to the glycosyl hydrolase 22 family. Monomer. Expressed weakly in myeloblasts, moderately in immature macrophages, and strongly in both mature macrophages and macrophage-rich tissues.

The protein localises to the secreted. It catalyses the reaction Hydrolysis of (1-&gt;4)-beta-linkages between N-acetylmuramic acid and N-acetyl-D-glucosamine residues in a peptidoglycan and between N-acetyl-D-glucosamine residues in chitodextrins.. Its function is as follows. Lysozymes have primarily a bacteriolytic function; those in tissues and body fluids are associated with the monocyte-macrophage system and enhance the activity of immunoagents. Lyz2 is active against a range of Gram-positive and Gram-negative bacteria. More effective than Lyz1 in killing Gram-negative bacteria. Lyz1 and Lyz2 are equally effective in killing Gram-positive bacteria. The polypeptide is Lysozyme C-2 (Lyz2) (Mus musculus (Mouse)).